Reading from the N-terminus, the 357-residue chain is Protein RecA (357 aa).

Residue 67 to 74 (GPESSGKT) coordinates ATP. Positions 333-357 (NELTPATAGNSHDEDAFADEGNEEF) are disordered. Residues 348–357 (AFADEGNEEF) are compositionally biased toward acidic residues.

The protein belongs to the RecA family.

Its subcellular location is the cytoplasm. Its function is as follows. Can catalyze the hydrolysis of ATP in the presence of single-stranded DNA, the ATP-dependent uptake of single-stranded DNA by duplex DNA, and the ATP-dependent hybridization of homologous single-stranded DNAs. It interacts with LexA causing its activation and leading to its autocatalytic cleavage. The sequence is that of Protein RecA from Pectobacterium carotovorum subsp. carotovorum (strain PC1).